The chain runs to 168 residues: Thiol peroxidase (168 aa).

The Thioredoxin domain occupies 20-168 (PAVGSQLPAF…DYDKALAALA (149 aa)). The active-site Cysteine sulfenic acid (-SOH) intermediate is cysteine 62. The cysteines at positions 62 and 96 are disulfide-linked.

Belongs to the peroxiredoxin family. Tpx subfamily. Homodimer.

The catalysed reaction is a hydroperoxide + [thioredoxin]-dithiol = an alcohol + [thioredoxin]-disulfide + H2O. Its function is as follows. Thiol-specific peroxidase that catalyzes the reduction of hydrogen peroxide and organic hydroperoxides to water and alcohols, respectively. Plays a role in cell protection against oxidative stress by detoxifying peroxides. In Chlorobaculum tepidum (strain ATCC 49652 / DSM 12025 / NBRC 103806 / TLS) (Chlorobium tepidum), this protein is Thiol peroxidase.